The chain runs to 159 residues: Major allergen Pyr c 1 (159 aa).

It belongs to the BetVI family.

This is Major allergen Pyr c 1 (PYRC1) from Pyrus communis (Pear).